Reading from the N-terminus, the 114-residue chain is Large ribosomal subunit protein uL22 (114 aa).

Belongs to the universal ribosomal protein uL22 family. Part of the 50S ribosomal subunit.

Its function is as follows. This protein binds specifically to 23S rRNA; its binding is stimulated by other ribosomal proteins, e.g. L4, L17, and L20. It is important during the early stages of 50S assembly. It makes multiple contacts with different domains of the 23S rRNA in the assembled 50S subunit and ribosome. Functionally, the globular domain of the protein is located near the polypeptide exit tunnel on the outside of the subunit, while an extended beta-hairpin is found that lines the wall of the exit tunnel in the center of the 70S ribosome. This is Large ribosomal subunit protein uL22 from Streptococcus mutans serotype c (strain ATCC 700610 / UA159).